Consider the following 496-residue polypeptide: Apolipoprotein N-acyltransferase (496 aa).

A run of 6 helical transmembrane segments spans residues 6–26, 50–70, 77–97, 114–134, 148–168, and 183–203; these read IICL…FFIP, FGYL…SIGV, FWWA…FFIS, LIFC…LTGL, ILIQ…VIYI, and LKIL…YGAV. Residues 220-464 enclose the CN hydrolase domain; it reads VQPSIPQTAK…QGLIPQKLTT (245 aa). The active-site Proton acceptor is glutamate 259. Lysine 322 is an active-site residue. Residue cysteine 372 is the Nucleophile of the active site. The helical transmembrane segment at 474–494 threads the bilayer; it reads FAMLLSIVFIILIHYLLSLIF.

The protein belongs to the CN hydrolase family. Apolipoprotein N-acyltransferase subfamily.

The protein resides in the cell inner membrane. The catalysed reaction is N-terminal S-1,2-diacyl-sn-glyceryl-L-cysteinyl-[lipoprotein] + a glycerophospholipid = N-acyl-S-1,2-diacyl-sn-glyceryl-L-cysteinyl-[lipoprotein] + a 2-acyl-sn-glycero-3-phospholipid + H(+). Its pathway is protein modification; lipoprotein biosynthesis (N-acyl transfer). In terms of biological role, catalyzes the phospholipid dependent N-acylation of the N-terminal cysteine of apolipoprotein, the last step in lipoprotein maturation. The chain is Apolipoprotein N-acyltransferase from Rickettsia prowazekii (strain Madrid E).